A 414-amino-acid chain; its full sequence is tRNA(Ile)-lysidine synthase (414 aa).

13–18 (SGGIDS) contributes to the ATP binding site.

Belongs to the tRNA(Ile)-lysidine synthase family.

The protein resides in the cytoplasm. The catalysed reaction is cytidine(34) in tRNA(Ile2) + L-lysine + ATP = lysidine(34) in tRNA(Ile2) + AMP + diphosphate + H(+). Ligates lysine onto the cytidine present at position 34 of the AUA codon-specific tRNA(Ile) that contains the anticodon CAU, in an ATP-dependent manner. Cytidine is converted to lysidine, thus changing the amino acid specificity of the tRNA from methionine to isoleucine. This chain is tRNA(Ile)-lysidine synthase, found in Thermotoga maritima (strain ATCC 43589 / DSM 3109 / JCM 10099 / NBRC 100826 / MSB8).